The chain runs to 195 residues: Imidazoleglycerol-phosphate dehydratase (195 aa).

This sequence belongs to the imidazoleglycerol-phosphate dehydratase family.

Its subcellular location is the cytoplasm. The catalysed reaction is D-erythro-1-(imidazol-4-yl)glycerol 3-phosphate = 3-(imidazol-4-yl)-2-oxopropyl phosphate + H2O. The protein operates within amino-acid biosynthesis; L-histidine biosynthesis; L-histidine from 5-phospho-alpha-D-ribose 1-diphosphate: step 6/9. This chain is Imidazoleglycerol-phosphate dehydratase, found in Cupriavidus taiwanensis (strain DSM 17343 / BCRC 17206 / CCUG 44338 / CIP 107171 / LMG 19424 / R1) (Ralstonia taiwanensis (strain LMG 19424)).